Here is a 561-residue protein sequence, read N- to C-terminus: Formate--tetrahydrofolate ligase (561 aa).

70-77 (TPAGEGKT) contributes to the ATP binding site.

The protein belongs to the formate--tetrahydrofolate ligase family.

The enzyme catalyses (6S)-5,6,7,8-tetrahydrofolate + formate + ATP = (6R)-10-formyltetrahydrofolate + ADP + phosphate. Its pathway is one-carbon metabolism; tetrahydrofolate interconversion. The polypeptide is Formate--tetrahydrofolate ligase (Pelagibacter ubique (strain HTCC1062)).